A 522-amino-acid polypeptide reads, in one-letter code: Biotin-dependent long chain acyl-coenzyme A carboxylase beta4 subunit (522 aa).

A CoA carboxyltransferase N-terminal domain is found at 11–261; sequence TAEKLAELRE…NCFDKPPVVN (251 aa). Positions 270-503 constitute a CoA carboxyltransferase C-terminal domain; the sequence is GHDLELDSIV…RLLLRKSMHL (234 aa).

It belongs to the AccD/PCCB family. In terms of assembly, the biotin-dependent long-chain acyl-CoA carboxylase (LCC) complex is composed of AccA3, which contains the biotin carboxylase (BC) and biotin carboxyl carrier protein (BCCP) domains, and AccD4, which contains the carboxyl transferase (CT) domain. The complex also contains the beta5 subunit AccD5 and the epsilon subunit AccE5. The four subunits are essential for activity, but AccD5, together with AccE5, probably plays a structural role rather than a catalytic one.

Its function is as follows. Component of a biotin-dependent acyl-CoA carboxylase complex. This subunit transfers the CO2 from carboxybiotin to the CoA ester substrate. When associated with the alpha3 subunit AccA3, the beta5 subunit AccD5 and the epsilon subunit AccE5, forms the LCC complex, which is involved in the carboxylation of long chain acyl-CoA. The LCC complex can use C16-C24 substrates, the highest specific activity is obtained with carboxy-C20-CoA. Has low activity with acetyl-CoA and propionyl-CoA. The polypeptide is Biotin-dependent long chain acyl-coenzyme A carboxylase beta4 subunit (Mycobacterium tuberculosis (strain ATCC 25618 / H37Rv)).